Consider the following 133-residue polypeptide: Phosphoribosyl-AMP cyclohydrolase (133 aa).

Asp-77 lines the Mg(2+) pocket. Cys-78 lines the Zn(2+) pocket. Mg(2+)-binding residues include Asp-79 and Asp-81. 2 residues coordinate Zn(2+): Cys-95 and Cys-102.

This sequence belongs to the PRA-CH family. Homodimer. Mg(2+) serves as cofactor. The cofactor is Zn(2+).

It localises to the cytoplasm. The enzyme catalyses 1-(5-phospho-beta-D-ribosyl)-5'-AMP + H2O = 1-(5-phospho-beta-D-ribosyl)-5-[(5-phospho-beta-D-ribosylamino)methylideneamino]imidazole-4-carboxamide. The protein operates within amino-acid biosynthesis; L-histidine biosynthesis; L-histidine from 5-phospho-alpha-D-ribose 1-diphosphate: step 3/9. In terms of biological role, catalyzes the hydrolysis of the adenine ring of phosphoribosyl-AMP. This Azotobacter chroococcum mcd 1 protein is Phosphoribosyl-AMP cyclohydrolase.